The chain runs to 312 residues: Mas-related G-protein coupled receptor member B3 (312 aa).

The Extracellular portion of the chain corresponds to 1–31 (MALRTSLITTTAPDKTSLPISICIIKFQVMN). The chain crosses the membrane as a helical span at residues 32-52 (LLSITISPVGMVLNIIVLWFL). Residues 53–67 (GFQICRNAFSAYILN) are Cytoplasmic-facing. The helical transmembrane segment at 68–88 (LAVADFLFLCSHSIFSFLIVC) threads the bilayer. The Extracellular segment spans residues 89 to 106 (KLHYFLFYIRQLLDTVTM). A helical membrane pass occupies residues 107-127 (FAYVFGLSITTIISIECCLSI). Over 128–140 (MWPIWYHCQRPRH) the chain is Cytoplasmic. The helical transmembrane segment at 141–161 (TSAVICVLLWALSLLFPALQM) threads the bilayer. The Extracellular portion of the chain corresponds to 162–180 (EKCSVLFNTFEYSWCGIIN). Residues 181-201 (IISGAWLVVLFVVLCGFSLIL) form a helical membrane-spanning segment. Topologically, residues 202-220 (LLRISCGSQQIPVTRLNVT) are cytoplasmic. Residues 221–241 (IALRVLLLLIFGIPFGIFWIV) traverse the membrane as a helical segment. The Extracellular portion of the chain corresponds to 242–259 (DKWNEENFFVRACGFSHH). Residues 260-280 (ILYVYCINICVNATIYFLVGS) form a helical membrane-spanning segment. At 281–312 (IRHGKFQKMTLKLILQRAIQGTPEEEGGERGP) the chain is on the cytoplasmic side.

The protein belongs to the G-protein coupled receptor 1 family. Mas subfamily.

The protein resides in the membrane. Functionally, orphan receptor. Probably involved in the function of nociceptive neurons. May regulate nociceptor function and/or development, including the sensation or modulation of pain. In Mus musculus (Mouse), this protein is Mas-related G-protein coupled receptor member B3 (Mrgprb3).